The following is a 114-amino-acid chain: UPF0145 protein TT_C1581 (114 aa).

Belongs to the UPF0145 family.

In Thermus thermophilus (strain ATCC BAA-163 / DSM 7039 / HB27), this protein is UPF0145 protein TT_C1581.